The primary structure comprises 382 residues: D-galactonate dehydratase (382 aa).

Aspartate 183 is a binding site for Mg(2+). Histidine 185 functions as the Proton donor in the catalytic mechanism. Mg(2+) is bound by residues glutamate 209 and glutamate 235. The active-site Proton acceptor is histidine 285. The interval 361 to 382 (NENPPDWRNPVWRHSDGSIAEW) is disordered.

The protein belongs to the mandelate racemase/muconate lactonizing enzyme family. GalD subfamily. It depends on Mg(2+) as a cofactor.

It carries out the reaction D-galactonate = 2-dehydro-3-deoxy-D-galactonate + H2O. It functions in the pathway carbohydrate acid metabolism; D-galactonate degradation; D-glyceraldehyde 3-phosphate and pyruvate from D-galactonate: step 1/3. In terms of biological role, catalyzes the dehydration of D-galactonate to 2-keto-3-deoxy-D-galactonate. This is D-galactonate dehydratase from Xanthomonas euvesicatoria pv. vesicatoria (strain 85-10) (Xanthomonas campestris pv. vesicatoria).